The chain runs to 58 residues: Lantibiotic macedovicin (58 aa).

The propeptide occupies 1-25 (MMNATENQIFVETVSDQELEMLIGG). Residues T33 and T35 each carry the 2,3-didehydrobutyrine modification. 2 cross-links (beta-methyllanthionine (Thr-Cys)) span residues 33-38 (TLTKDC) and 35-57 (TKDCPNVISSICAGTIITACKNC). An intrachain disulfide couples C46 to C54.

In terms of processing, maturation of macedovicin involves the enzymatic dehydration of Thr-33 and Thr-35 into dehydrobutyrine residues, that can form a beta-methyllanthionine bond with Cys-38 and Cys-57, respectively. This is followed by membrane translocation and cleavage of the modified precursor.

It localises to the secreted. Its function is as follows. Lanthionine-containing peptide antibiotic (lantibiotic) active on Gram-positive bacteria. Macedovicin inhibits a broad spectrum of lactic acid bacteria, several food spoilage species (e.g. Clostridium spp.) and oral streptococci. The bactericidal activity of lantibiotics is based on depolarization of energized bacterial cytoplasmic membranes, initiated by the formation of aqueous transmembrane pores. The polypeptide is Lantibiotic macedovicin (Streptococcus macedonicus (strain ACA-DC 198)).